Consider the following 597-residue polypeptide: Period protein homolog lin-42 (597 aa).

The interval 1–44 (MEPAGHSSATHNIVVPNANPTQPQPLAPAMREEGATLSPPNTWS) is disordered. One can recognise a PAS domain in the interval 155–223 (LQASHVSSNF…VRQAHIDLHN (69 aa)). 4 disordered regions span residues 313–335 (PVPSTSRHSHHHHHSSLKDQNQG), 418–450 (KSQSRPESPAKQDEPFDEKKYPPQTPLTREALT), 473–509 (DDVPSSPPAKRTTPIHWTSSSQNHYRTMAPAPPPPPG), and 555–597 (DGLL…DSQN). The segment covering 425-438 (SPAKQDEPFDEKKY) has biased composition (basic and acidic residues). Positions 487-497 (IHWTSSSQNHY) are enriched in polar residues. The segment covering 561–577 (GATSTGGASPTSGTNSP) has biased composition (low complexity).

Its subcellular location is the nucleus. It localises to the cytoplasm. Functionally, transcriptional repressor which interacts with the promoter region of target genes. Has a specific role in developmental timing where it regulates temporal expression of a number of miRNAs and mRNAs. Controls temporal cell fate transition during embryonic and early larval development by restricting the expression of specific miRNAs, including let-7, miR-48, lin-4, miR-35 and miR-58. Restricts the accumulation of lin-29 in the hypodermis to the larval L4 stage, thus controlling terminal differentiation of seam cells. Has a role in the miRNA-mediated specification of asymmetric gene expression patterns in gustatory neurons. May also regulate genes involved in other biological processes including transport, small molecule metabolism, and growth. Inhibits dauer formation, by antagonizing daf-12. Its function is as follows. Specifically required for maintaining the timing of larval development and molting cycle rhythms. This chain is Period protein homolog lin-42, found in Caenorhabditis elegans.